A 201-amino-acid chain; its full sequence is Phosphatidylglycerophosphatase and protein-tyrosine phosphatase 1 (201 aa).

The N-terminal 27 residues, 1–27 (MAATALLEAGLARVLFYPTLLYTLFRG), are a transit peptide targeting the mitochondrion. A Tyrosine-protein phosphatase domain is found at 37-188 (WYHRIDPTVL…LKEFHKQITA (152 aa)). The active-site Phosphocysteine intermediate is the cysteine 132.

This sequence belongs to the protein-tyrosine phosphatase family. Non-receptor class dual specificity subfamily. Interacts with STYXL1; the interaction inhibits PTPMT1 catalytic activity.

The protein localises to the mitochondrion inner membrane. The enzyme catalyses a 1,2-diacyl-sn-glycero-3-phospho-(1'-sn-glycero-3'-phosphate) + H2O = a 1,2-diacyl-sn-glycero-3-phospho-(1'-sn-glycerol) + phosphate. The catalysed reaction is O-phospho-L-tyrosyl-[protein] + H2O = L-tyrosyl-[protein] + phosphate. It catalyses the reaction O-phospho-L-seryl-[protein] + H2O = L-seryl-[protein] + phosphate. It carries out the reaction O-phospho-L-threonyl-[protein] + H2O = L-threonyl-[protein] + phosphate. The enzyme catalyses 1,2-di-(9Z-octadecenoyl)-sn-glycero-3-phospho-(1'-sn-glycerol-3'-phosphate) + H2O = 1,2-di-(9Z-octadecenoyl)-sn-glycero-3-phospho-(1'-sn-glycerol) + phosphate. The catalysed reaction is 1,2-dioctanoyl-sn-glycero-3-phospho-(1D-myo-inositol-5-phosphate) + H2O = 1,2-dioctanoyl-sn-glycero-3-phospho-(1D-myo-inositol) + phosphate. It catalyses the reaction a 1-acyl-2-hexanoyl-sn-glycero-3-phospho-(1D-myo-inositol-5-phosphate) + H2O = a 1-acyl-2-hexanoyl-sn-glycero-3-phospho-(1D-myo-inositol) + phosphate. It carries out the reaction 1,2-dibutyryl-sn-glycero-3-phospho-(1D-myo-inositol-5-phosphate) + H2O = 1,2-dibutyryl-sn-glycero-3-phospho-(1D-myo-inositol) + phosphate. The protein operates within phospholipid metabolism; phosphatidylglycerol biosynthesis; phosphatidylglycerol from CDP-diacylglycerol: step 2/2. Its function is as follows. Lipid phosphatase which dephosphorylates phosphatidylglycerophosphate (PGP) to phosphatidylglycerol (PG). PGP is an essential intermediate in the biosynthetic pathway of cardiolipin, a mitochondrial-specific phospholipid regulating the membrane integrity and activities of the organelle. Has also been shown to display phosphatase activity toward phosphoprotein substrates, specifically mediates dephosphorylation of mitochondrial proteins, thereby playing an essential role in ATP production. Has probably a preference for proteins phosphorylated on Ser and/or Thr residues compared to proteins phosphorylated on Tyr residues. Probably involved in regulation of insulin secretion in pancreatic beta cells. May prevent intrinsic apoptosis, probably by regulating mitochondrial membrane integrity. The chain is Phosphatidylglycerophosphatase and protein-tyrosine phosphatase 1 from Homo sapiens (Human).